The following is a 232-amino-acid chain: Small ribosomal subunit protein uS3 (232 aa).

One can recognise a KH type-2 domain in the interval valine 39–arginine 107.

It belongs to the universal ribosomal protein uS3 family. As to quaternary structure, part of the 30S ribosomal subunit. Forms a tight complex with proteins S10 and S14.

Functionally, binds the lower part of the 30S subunit head. Binds mRNA in the 70S ribosome, positioning it for translation. In Aliivibrio salmonicida (strain LFI1238) (Vibrio salmonicida (strain LFI1238)), this protein is Small ribosomal subunit protein uS3.